A 704-amino-acid chain; its full sequence is Capsule polysaccharide modification protein LipA (704 aa).

It localises to the cell inner membrane. Functionally, involved in the phospholipid modification of the capsular polysaccharide, a strong requirement for its translocation to the cell surface. The chain is Capsule polysaccharide modification protein LipA (lipA) from Neisseria meningitidis serogroup B (strain ATCC BAA-335 / MC58).